The following is a 173-amino-acid chain: Adenine phosphoribosyltransferase (173 aa).

The protein belongs to the purine/pyrimidine phosphoribosyltransferase family. As to quaternary structure, homodimer.

The protein localises to the cytoplasm. It carries out the reaction AMP + diphosphate = 5-phospho-alpha-D-ribose 1-diphosphate + adenine. It participates in purine metabolism; AMP biosynthesis via salvage pathway; AMP from adenine: step 1/1. Its function is as follows. Catalyzes a salvage reaction resulting in the formation of AMP, that is energically less costly than de novo synthesis. The chain is Adenine phosphoribosyltransferase from Methanococcus vannielii (strain ATCC 35089 / DSM 1224 / JCM 13029 / OCM 148 / SB).